Consider the following 224-residue polypeptide: UPF0758 protein lmo1549 (224 aa).

Positions 102-224 constitute an MPN domain; the sequence is VVRCPEDAVK…YISLKEKGYF (123 aa). His173, His175, and Asp186 together coordinate Zn(2+). The JAMM motif motif lies at 173–186; sequence HNHPSGDPTPSSED.

The protein belongs to the UPF0758 family.

The protein is UPF0758 protein lmo1549 of Listeria monocytogenes serovar 1/2a (strain ATCC BAA-679 / EGD-e).